Consider the following 379-residue polypeptide: Oxidized polyvinyl alcohol hydrolase (379 aa).

A signal peptide spans 1–23 (MNQSLGVLRLTRGVIALALASVA). Residues Ser203 and Ser309 each act as charge relay system in the active site.

The protein belongs to the peptidase S9A family. Monomer.

The enzyme catalyses nonane-4,6-dione + H2O = pentan-2-one + butanoate + H(+). In terms of biological role, catalyzes the hydrolysis of 4,6-nonanedione, a beta-diketone compound. Also mediates hydrolysis of oxidized polyvinyl alcohol (PVA) in the second step in the degradation of polyvinyl alcohol. Not active toward the monoketone structure. The polypeptide is Oxidized polyvinyl alcohol hydrolase (pvaB) (Pseudomonas sp).